The following is a 196-amino-acid chain: Probable malonic semialdehyde reductase RutE (196 aa).

Belongs to the nitroreductase family. HadB/RutE subfamily. FMN is required as a cofactor.

The enzyme catalyses 3-hydroxypropanoate + NADP(+) = 3-oxopropanoate + NADPH + H(+). In terms of biological role, may reduce toxic product malonic semialdehyde to 3-hydroxypropionic acid, which is excreted. In Escherichia coli O7:K1 (strain IAI39 / ExPEC), this protein is Probable malonic semialdehyde reductase RutE.